Consider the following 295-residue polypeptide: Cytidine deaminase (295 aa).

CMP/dCMP-type deaminase domains are found at residues 48–168 and 187–295; these read TDNQ…FGPS and EDDD…YLSL. 89–91 is a binding site for substrate; the sequence is NME. A Zn(2+)-binding site is contributed by His102. Catalysis depends on Glu104, which acts as the Proton donor. Residues Cys129 and Cys132 each contribute to the Zn(2+) site.

Belongs to the cytidine and deoxycytidylate deaminase family. As to quaternary structure, homodimer. Zn(2+) is required as a cofactor.

The catalysed reaction is cytidine + H2O + H(+) = uridine + NH4(+). It carries out the reaction 2'-deoxycytidine + H2O + H(+) = 2'-deoxyuridine + NH4(+). This enzyme scavenges exogenous and endogenous cytidine and 2'-deoxycytidine for UMP synthesis. The chain is Cytidine deaminase from Vibrio vulnificus (strain YJ016).